A 514-amino-acid polypeptide reads, in one-letter code: Peptide chain release factor 3 (514 aa).

The region spanning 8 to 268 (KKRRTFAIIS…TFLEFAPEPH (261 aa)) is the tr-type G domain. GTP is bound by residues 17 to 24 (SHPDAGKT), 85 to 89 (DTPGH), and 139 to 142 (NKLD).

The protein belongs to the TRAFAC class translation factor GTPase superfamily. Classic translation factor GTPase family. PrfC subfamily.

The protein resides in the cytoplasm. In terms of biological role, increases the formation of ribosomal termination complexes and stimulates activities of RF-1 and RF-2. It binds guanine nucleotides and has strong preference for UGA stop codons. It may interact directly with the ribosome. The stimulation of RF-1 and RF-2 is significantly reduced by GTP and GDP, but not by GMP. This is Peptide chain release factor 3 from Streptococcus pyogenes serotype M28 (strain MGAS6180).